The primary structure comprises 903 residues: MVSLGGFARKLFGSANDRRVRGYKGRVDAINALEAEMKALSDEALAAKTAEFRRELADGKTLDDILVPAFAVVREAALRVLGLRPFDVQLIGGMILHERAIAEMKTGEGKTLVATLPVYLNALAGKGVHVVTVNDYLAQRDAGMMGRIYGFLGMTTGVIVHGLSDEQRRDAYACDVTYATNNELGFDYLRDNMKYERGQMVQRGHFFAIVDEVDSILVDEARTPLIISGPLDDRSDLYNTINEFIPLLSPEDYEIDEKQRSANFSEEGTEKLENMLREAGLLKGESLYDIENVAIVHHVNNALKAHKLFTRDKDYIVRNGEIVIIDEFTGRMMPGRRYSEGQHQALEAKEKVQIQPENQTLASITFQNYFRMYDKLAGMTGTAATEAEEFGNIYGLEVLEVPTNLPIKRIDEDDEVYRTVGEKFKAIIDEIKSAHERGQPMLVGTTSIEKSELLADMLKKSGFSKFQVLNARYHEQEAYIVAQAGVPGAVTIATNMAGRGTDIQLGGNPDMRIQQELADVEPGPEREAREKAIREEVQKLKEKALAAGGLYVLATERHESRRIDNQLRGRSGRQGDPGRSKFYLSLQDDLMRIFGSDRMDGMLQKLGLKEGEAIVHPWINKALERAQKKVEARNFDIRKNLLKYDDVLNDQRKVIFEQRIELMDAESVTDTVTDMRNEVIEEIVAKRIPERAYAEKWDAEGLKADVQQYFNLDLPIAEWVAEEGIAEDDIRERITAAVDKAAAERAERFGPEIMQYVERSVVLQTLDHLWREHIVNLDHLRSVIGFRGYAQRDPLQEYKSEAFELFQALLGNLRQAVTAQLMRVELVREAPEEPQPLPPMQAHHIDPLTGEDDFAQAGETLLAVAPANRDPADPSTWGKVARNEACPCGSGKKYKHCHGIYEA.

ATP contacts are provided by residues Q89, 107–111 (GEGKT), and D502. The Zn(2+) site is built by C886, C888, C897, and H898.

This sequence belongs to the SecA family. In terms of assembly, monomer and homodimer. Part of the essential Sec protein translocation apparatus which comprises SecA, SecYEG and auxiliary proteins SecDF-YajC and YidC. It depends on Zn(2+) as a cofactor.

It localises to the cell inner membrane. It is found in the cytoplasm. It carries out the reaction ATP + H2O + cellular proteinSide 1 = ADP + phosphate + cellular proteinSide 2.. Functionally, part of the Sec protein translocase complex. Interacts with the SecYEG preprotein conducting channel. Has a central role in coupling the hydrolysis of ATP to the transfer of proteins into and across the cell membrane, serving both as a receptor for the preprotein-SecB complex and as an ATP-driven molecular motor driving the stepwise translocation of polypeptide chains across the membrane. The sequence is that of Protein translocase subunit SecA from Rhizobium meliloti (strain 1021) (Ensifer meliloti).